Here is a 307-residue protein sequence, read N- to C-terminus: Cytochrome c1, heme protein, mitochondrial (307 aa).

The N-terminal 56 residues, 1–56 (MFQFVKKKNEFLKFARLGSRAFTQNAQKTHSKGSNIALVSSSLLSVGMIALYYNVY), are a transit peptide targeting the mitochondrion. Residues 57 to 269 (GPSLSAGTPK…EPELDIRKKM (213 aa)) lie on the Mitochondrial intermembrane side of the membrane. A Cytochrome c domain is found at 89–259 (ASLRRGFQVY…DVVNFLHWAS (171 aa)). 4 residues coordinate heme c: Cys-102, Cys-105, His-106, and Met-225. The chain crosses the membrane as a helical span at residues 270-287 (GFQVITVLTILTALSMWY). The Mitochondrial matrix portion of the chain corresponds to 288 to 307 (KRFKWTPIKNRKIFYQRPIK).

Belongs to the cytochrome c family. Component of the ubiquinol-cytochrome c oxidoreductase (cytochrome b-c1 complex, complex III, CIII), a multisubunit enzyme composed of 3 respiratory subunits cytochrome b, cytochrome c1 and Rieske protein, 2 core protein subunits, and additional low-molecular weight protein subunits. The complex exists as an obligatory dimer and forms supercomplexes (SCs) in the inner mitochondrial membrane with cytochrome c oxidase (complex IV, CIV). Heme c is required as a cofactor.

The protein localises to the mitochondrion inner membrane. The catalysed reaction is a quinol + 2 Fe(III)-[cytochrome c](out) = a quinone + 2 Fe(II)-[cytochrome c](out) + 2 H(+)(out). Component of the ubiquinol-cytochrome c oxidoreductase, a multisubunit transmembrane complex that is part of the mitochondrial electron transport chain which drives oxidative phosphorylation. The respiratory chain contains 3 multisubunit complexes succinate dehydrogenase (complex II, CII), ubiquinol-cytochrome c oxidoreductase (cytochrome b-c1 complex, complex III, CIII) and cytochrome c oxidase (complex IV, CIV), that cooperate to transfer electrons derived from NADH and succinate to molecular oxygen, creating an electrochemical gradient over the inner membrane that drives transmembrane transport and the ATP synthase. The cytochrome b-c1 complex catalyzes electron transfer from ubiquinol to cytochrome c, linking this redox reaction to translocation of protons across the mitochondrial inner membrane, with protons being carried across the membrane as hydrogens on the quinol. In the process called Q cycle, 2 protons are consumed from the matrix, 4 protons are released into the intermembrane space and 2 electrons are passed to cytochrome c. Cytochrome c1 is a catalytic core subunit containing a c-type heme. It transfers electrons from the [2Fe-2S] iron-sulfur cluster of the Rieske protein to cytochrome c. The sequence is that of Cytochrome c1, heme protein, mitochondrial (cyt1) from Schizosaccharomyces pombe (strain 972 / ATCC 24843) (Fission yeast).